Consider the following 787-residue polypeptide: Serine/threonine-protein kinase SCH9 (787 aa).

Disordered regions lie at residues 1–82 (MVDF…QSGT), 132–172 (PQQQ…GSSQ), and 238–280 (SPVS…LFGQ). The segment covering 132–155 (PQQQQQQQAQQPPPEQQQSSAPYQ) has biased composition (low complexity). Composition is skewed to polar residues over residues 156–172 (NSAN…GSSQ) and 239–263 (PVSS…SNHG). The C2 domain maps to 182 to 354 (DKTGNKLSPA…KNNKNESEWL (173 aa)). A Protein kinase domain is found at 392–653 (FHFLRLLGKG…ARELKAHPFF (262 aa)). Residues 398 to 406 (LGKGTFGQV) and K421 each bind ATP. The active-site Proton acceptor is the D518. One can recognise an AGC-kinase C-terminal domain in the interval 654 to 729 (ADIDWDLLRA…VDDSTMDDHF (76 aa)).

This sequence belongs to the protein kinase superfamily. AGC Ser/Thr protein kinase family. cAMP subfamily.

The catalysed reaction is L-seryl-[protein] + ATP = O-phospho-L-seryl-[protein] + ADP + H(+). It catalyses the reaction L-threonyl-[protein] + ATP = O-phospho-L-threonyl-[protein] + ADP + H(+). Functionally, protein kinase that is part of growth control pathway which is at least partially redundant with the cAMP pathway. Plays a role in filamentous growth and virulence. Prevents hypha formation specifically under hypoxia at high CO(2) levels. Required for chlamydospore formation, distinctive morphological feature of the fungal pathogen C.albicans that can be induced to form in oxygen-limited environments and has been reported in clinical specimens. This Candida albicans (strain SC5314 / ATCC MYA-2876) (Yeast) protein is Serine/threonine-protein kinase SCH9 (SCH9).